The primary structure comprises 223 residues: Ribonuclease 3 (223 aa).

The RNase III domain maps to 3–125 (LERLQKKLGY…IIAAIYLDAG (123 aa)). Residue Glu-38 coordinates Mg(2+). Asp-42 is an active-site residue. Mg(2+) contacts are provided by Asp-111 and Glu-114. Glu-114 is a catalytic residue. One can recognise a DRBM domain in the interval 152-222 (DPKTRLQEFL…AEQVLAKLTT (71 aa)).

It belongs to the ribonuclease III family. In terms of assembly, homodimer. It depends on Mg(2+) as a cofactor.

The protein resides in the cytoplasm. The catalysed reaction is Endonucleolytic cleavage to 5'-phosphomonoester.. Functionally, digests double-stranded RNA. Involved in the processing of primary rRNA transcript to yield the immediate precursors to the large and small rRNAs (23S and 16S). Processes some mRNAs, and tRNAs when they are encoded in the rRNA operon. Processes pre-crRNA and tracrRNA of type II CRISPR loci if present in the organism. The polypeptide is Ribonuclease 3 (Actinobacillus pleuropneumoniae serotype 3 (strain JL03)).